The sequence spans 184 residues: Protein DESIGUAL 3 (184 aa).

A signal peptide spans 1-24 (MESELGFLVSVVIICADITATVLG). Basic residues predominate over residues 34 to 45 (APHHHHQQHSRH). Positions 34-53 (APHHHHQQHSRHSGSGCRRS) are disordered. 3 helical membrane-spanning segments follow: residues 62–82 (GVAA…LGGC), 99–119 (ILAV…YSTL), and 140–160 (FFLI…AYYV). Asparagine 180 is a glycosylation site (N-linked (GlcNAc...) asparagine).

Belongs to the DESIGUAL family. Mainly expressed in roots, inflorescences and developing leaves, and, at low levels, in mature leaves.

The protein localises to the endoplasmic reticulum membrane. Functionally, involved, partially redundantly with VCC/DEAL1 and DEAL2, to ensure bilateral symmetry development and early leaf margin patterning, probably via the regulation of auxin and CUC2 distribution. This is Protein DESIGUAL 3 from Arabidopsis thaliana (Mouse-ear cress).